A 512-amino-acid polypeptide reads, in one-letter code: Polyamine oxidase 1 (512 aa).

Positions 38 and 46 each coordinate FAD. Positions 448-470 (DRMAEPLPRGPDAAADERPPSPR) are disordered. Glu-476 is an FAD binding site.

The protein belongs to the flavin monoamine oxidase family. FAD is required as a cofactor.

It localises to the cytoplasm. The catalysed reaction is spermine + O2 + H2O = 3-aminopropanal + spermidine + H2O2. It catalyses the reaction N(1)-acetylspermine + O2 + H2O = 3-acetamidopropanal + spermidine + H2O2. The enzyme catalyses norspermine + O2 + H2O = norspermidine + 3-aminopropanal + H2O2. It carries out the reaction thermospermine + O2 + H2O = 3-aminopropanal + spermidine + H2O2. Its pathway is amine and polyamine degradation; spermine degradation. Its function is as follows. Flavoenzyme involved in polyamine back-conversion. Catalyzes the oxidation of the secondary amino group of polyamines, such as spermine and its acetyl derivatives. Substrate preference is thermospermine &gt; spermine &gt; norspermine &gt; N(1)-acetylspermine. No activity detected when putrescine or spermidine are used as substrates. Plays an important role in the regulation of polyamine intracellular concentration. This chain is Polyamine oxidase 1, found in Oryza sativa subsp. japonica (Rice).